Reading from the N-terminus, the 291-residue chain is Phytanoyl-CoA dioxygenase domain-containing protein 1 (291 aa).

Residues Lys-102, Met-141, 156 to 158 (HQD), and Trp-174 contribute to the 2-oxoglutarate site. Residues His-156 and Asp-158 each contribute to the Fe cation site. Position 246 (His-246) interacts with Fe cation. Residues Ser-248 and Arg-257 each contribute to the 2-oxoglutarate site.

Belongs to the PhyH family. PHYHD1 subfamily. It depends on Fe cation as a cofactor.

2-oxoglutarate(2OG)-dependent dioxygenase that catalyzes the conversion of 2-oxoglutarate to succinate and CO(2) in an iron-dependent manner. However, does not couple 2OG turnover to the hydroxylation of acyl-coenzyme A derivatives, implying that it is not directly involved in phytanoyl coenzyme-A metabolism. Does not show detectable activity towards fatty acid CoA thioesters. The sequence is that of Phytanoyl-CoA dioxygenase domain-containing protein 1 (phyhd1) from Danio rerio (Zebrafish).